Consider the following 433-residue polypeptide: uncharacterized protein (433 aa).

The tract at residues 1-126 (MAAHIALIAH…VIKLLGKTKT (126 aa)) is methylglyoxal synthase. Residues 1–145 (MAAHIALIAH…GQGNVERELD (145 aa)) enclose the MGS-like domain. The active site involves D62. The DAGKc domain occupies 127–262 (GHLIFNPVAG…VDTALCNDIP (136 aa)).

The protein in the N-terminal section; belongs to the methylglyoxal synthase family.

This is an uncharacterized protein from Synechocystis sp. (strain ATCC 27184 / PCC 6803 / Kazusa).